Here is a 515-residue protein sequence, read N- to C-terminus: Ribosome assembly protein 4 (515 aa).

Positions 20–128 (REVAIIPKDL…LLYTPRAVFK (109 aa)) are interaction with MDN1. A ubiquitin-like (UBL) domain region spans residues 29–125 (LPNVSIKFQA…QITLLYTPRA (97 aa)). 8 WD repeats span residues 141–181 (GHGS…PMHT), 184–223 (GHYN…CLGD), 227–273 (GHSK…CQYT), 276–314 (GHTN…RCIN), 352–396 (AQKK…KPIA), 400–439 (GHQK…FIST), 442–481 (GHVA…LSVD), and 484–515 (GHKD…LWTH).

This sequence belongs to the NLE1/RSA4 family. In terms of assembly, associates with the pre-60S ribosomal particle. Interacts (via WD repeats) with uL18 (RPL5). Interacts (via UBL domain) with MDN1 (via VWFA/MIDAS domain). Interacts (via WD repeats) with NSA2.

The protein localises to the nucleus. It is found in the nucleolus. In terms of biological role, involved in ribosome biogenesis. Required for processing and efficient intra-nuclear transport of pre-60S ribosomal subunits. Interacts with the AAA-ATPase Midasin (MDN1/REA1), which is essential for the ATP-dependent dissociation of a group of nonribosomal factors from the pre-60S particle. This is Ribosome assembly protein 4 from Saccharomyces cerevisiae (strain ATCC 204508 / S288c) (Baker's yeast).